Reading from the N-terminus, the 205-residue chain is Regulator of G-protein signaling 4 (205 aa).

3 S-palmitoyl cysteine lipidation sites follow: Cys-2, Cys-12, and Cys-95. The 117-residue stretch at 62–178 (SLENLISHEC…LKSRFYLDLV (117 aa)) folds into the RGS domain.

Palmitoylated on Cys-2 and/or Cys-12. Post-translationally, phosphorylated by cyclic GMP-dependent protein kinase. In terms of tissue distribution, expressed in brain and heart. Expressed in brain at protein level. Expressed in prefontal and visual cortex. Isoform 4 and isoform 5 are expressed ubiquitously. Isoform 1, isoform 2 and isoform 3 are not expressed in the cerebellum.

Inhibits signal transduction by increasing the GTPase activity of G protein alpha subunits thereby driving them into their inactive GDP-bound form. Activity on G(z)-alpha is inhibited by phosphorylation of the G-protein. Activity on G(z)-alpha and G(i)-alpha-1 is inhibited by palmitoylation of the G-protein. This is Regulator of G-protein signaling 4 (RGS4) from Homo sapiens (Human).